We begin with the raw amino-acid sequence, 123 residues long: Large ribosomal subunit protein uL14 (123 aa).

It belongs to the universal ribosomal protein uL14 family. In terms of assembly, part of the 50S ribosomal subunit. Forms a cluster with proteins L3 and L19. In the 70S ribosome, L14 and L19 interact and together make contacts with the 16S rRNA in bridges B5 and B8.

In terms of biological role, binds to 23S rRNA. Forms part of two intersubunit bridges in the 70S ribosome. This chain is Large ribosomal subunit protein uL14, found in Sodalis glossinidius (strain morsitans).